The following is a 303-amino-acid chain: Acetylglutamate kinase (303 aa).

Residues 73 to 74, R95, and N194 contribute to the substrate site; that span reads GG.

It belongs to the acetylglutamate kinase family. ArgB subfamily.

The protein resides in the cytoplasm. The catalysed reaction is N-acetyl-L-glutamate + ATP = N-acetyl-L-glutamyl 5-phosphate + ADP. It functions in the pathway amino-acid biosynthesis; L-arginine biosynthesis; N(2)-acetyl-L-ornithine from L-glutamate: step 2/4. In terms of biological role, catalyzes the ATP-dependent phosphorylation of N-acetyl-L-glutamate. This chain is Acetylglutamate kinase, found in Saccharopolyspora erythraea (strain ATCC 11635 / DSM 40517 / JCM 4748 / NBRC 13426 / NCIMB 8594 / NRRL 2338).